A 367-amino-acid chain; its full sequence is 3-dehydroquinate synthase (367 aa).

NAD(+) contacts are provided by residues Gly99–Asp103, Thr123–Thr124, Lys136, Lys145, and Phe163–Thr166. Zn(2+) is bound by residues Glu178, His242, and His259.

It belongs to the sugar phosphate cyclases superfamily. Dehydroquinate synthase family. Requires Co(2+) as cofactor. Zn(2+) serves as cofactor. It depends on NAD(+) as a cofactor.

It is found in the cytoplasm. It carries out the reaction 7-phospho-2-dehydro-3-deoxy-D-arabino-heptonate = 3-dehydroquinate + phosphate. It participates in metabolic intermediate biosynthesis; chorismate biosynthesis; chorismate from D-erythrose 4-phosphate and phosphoenolpyruvate: step 2/7. In terms of biological role, catalyzes the conversion of 3-deoxy-D-arabino-heptulosonate 7-phosphate (DAHP) to dehydroquinate (DHQ). This chain is 3-dehydroquinate synthase, found in Chlorobaculum parvum (strain DSM 263 / NCIMB 8327) (Chlorobium vibrioforme subsp. thiosulfatophilum).